A 54-amino-acid polypeptide reads, in one-letter code: Conotoxin mr5.4b (54 aa).

Positions 1-14 are cleaved as a signal peptide; that stretch reads ILLLLIASAPSVDA. The propeptide occupies 15–40; sequence QLKTKDDVPLASFHANVKRTLQKLLN. Position 52 is a 4-carboxyglutamate (Glu-52).

The protein belongs to the conotoxin T superfamily. Post-translationally, contains 2 disulfide bonds that can be either 'C1-C3, C2-C4' or 'C1-C4, C2-C3', since these disulfide connectivities have been observed for conotoxins with cysteine framework V (for examples, see AC P0DQQ7 and AC P81755). Expressed by the venom duct.

Its subcellular location is the secreted. This Conus marmoreus (Marble cone) protein is Conotoxin mr5.4b.